The following is a 331-amino-acid chain: DSC E3 ubiquitin ligase complex subunit D (331 aa).

The N-linked (GlcNAc...) asparagine glycan is linked to asparagine 26. 3 helical membrane passes run 63–83 (ILIY…ILFA), 107–127 (PFIG…NFFT), and 159–179 (LFLL…LIVE). Residues 197-214 (VQDHDSEERGVHRTRPES) are compositionally biased toward basic and acidic residues. The interval 197-225 (VQDHDSEERGVHRTRPESRSSVVGAELDE) is disordered.

Component of the DSC E3 ubiquitin ligase complex composed of dscA, dscB, dscC and dscD.

It localises to the endoplasmic reticulum membrane. It functions in the pathway protein modification; protein ubiquitination. Functionally, component of the DSC E3 ubiquitin ligase complex which is required for the srbA transcriptional activator proteolytic cleavage to release the soluble transcription factor from the membrane in low oxygen or sterol conditions. Required for growth during hypoxia and triazole drug susceptibility, as well as for virulence in a murine model of invasive pulmonary aspergillosis (IPA). The chain is DSC E3 ubiquitin ligase complex subunit D from Aspergillus fumigatus (strain CBS 144.89 / FGSC A1163 / CEA10) (Neosartorya fumigata).